Consider the following 522-residue polypeptide: 2-isopropylmalate synthase (522 aa).

The region spanning 5-267 is the Pyruvate carboxyltransferase domain; sequence VIIFDTTLRD…ETGINAKEIH (263 aa). Mn(2+) contacts are provided by Asp-14, His-202, His-204, and Asn-238. The interval 392–522 is regulatory domain; that stretch reads QLQQLVVQSD…MQKNRELGGV (131 aa).

This sequence belongs to the alpha-IPM synthase/homocitrate synthase family. LeuA type 1 subfamily. In terms of assembly, homodimer. The cofactor is Mn(2+).

The protein localises to the cytoplasm. The catalysed reaction is 3-methyl-2-oxobutanoate + acetyl-CoA + H2O = (2S)-2-isopropylmalate + CoA + H(+). It functions in the pathway amino-acid biosynthesis; L-leucine biosynthesis; L-leucine from 3-methyl-2-oxobutanoate: step 1/4. In terms of biological role, catalyzes the condensation of the acetyl group of acetyl-CoA with 3-methyl-2-oxobutanoate (2-ketoisovalerate) to form 3-carboxy-3-hydroxy-4-methylpentanoate (2-isopropylmalate). In Shewanella baltica (strain OS195), this protein is 2-isopropylmalate synthase.